A 375-amino-acid polypeptide reads, in one-letter code: Carbamoyl phosphate synthase small chain (375 aa).

Residues 1–186 form a CPSase region; the sequence is MKAILALEDG…IVDGTYAWPG (186 aa). The L-glutamine site is built by Ser-45, Gly-238, and Gly-240. The 186-residue stretch at 190 to 375 folds into the Glutamine amidotransferase type-1 domain; that stretch reads RLVVFDMGIK…RNLVRKETGK (186 aa). Cys-265 (nucleophile) is an active-site residue. L-glutamine is bound by residues Leu-266, Gln-269, Asn-307, Gly-309, and Phe-310. Residues His-348 and Glu-350 contribute to the active site.

The protein belongs to the CarA family. In terms of assembly, composed of two chains; the small (or glutamine) chain promotes the hydrolysis of glutamine to ammonia, which is used by the large (or ammonia) chain to synthesize carbamoyl phosphate. Tetramer of heterodimers (alpha,beta)4.

The catalysed reaction is hydrogencarbonate + L-glutamine + 2 ATP + H2O = carbamoyl phosphate + L-glutamate + 2 ADP + phosphate + 2 H(+). The enzyme catalyses L-glutamine + H2O = L-glutamate + NH4(+). It participates in amino-acid biosynthesis; L-arginine biosynthesis; carbamoyl phosphate from bicarbonate: step 1/1. Its pathway is pyrimidine metabolism; UMP biosynthesis via de novo pathway; (S)-dihydroorotate from bicarbonate: step 1/3. In terms of biological role, small subunit of the glutamine-dependent carbamoyl phosphate synthetase (CPSase). CPSase catalyzes the formation of carbamoyl phosphate from the ammonia moiety of glutamine, carbonate, and phosphate donated by ATP, constituting the first step of 2 biosynthetic pathways, one leading to arginine and/or urea and the other to pyrimidine nucleotides. The small subunit (glutamine amidotransferase) binds and cleaves glutamine to supply the large subunit with the substrate ammonia. In Solidesulfovibrio magneticus (strain ATCC 700980 / DSM 13731 / RS-1) (Desulfovibrio magneticus), this protein is Carbamoyl phosphate synthase small chain.